A 241-amino-acid polypeptide reads, in one-letter code: Phosphoribosylaminoimidazole-succinocarboxamide synthase (241 aa).

It belongs to the SAICAR synthetase family.

The catalysed reaction is 5-amino-1-(5-phospho-D-ribosyl)imidazole-4-carboxylate + L-aspartate + ATP = (2S)-2-[5-amino-1-(5-phospho-beta-D-ribosyl)imidazole-4-carboxamido]succinate + ADP + phosphate + 2 H(+). Its pathway is purine metabolism; IMP biosynthesis via de novo pathway; 5-amino-1-(5-phospho-D-ribosyl)imidazole-4-carboxamide from 5-amino-1-(5-phospho-D-ribosyl)imidazole-4-carboxylate: step 1/2. In Latilactobacillus sakei subsp. sakei (strain 23K) (Lactobacillus sakei subsp. sakei), this protein is Phosphoribosylaminoimidazole-succinocarboxamide synthase.